We begin with the raw amino-acid sequence, 457 residues long: Succinate-semialdehyde dehydrogenase [NADP(+)] 1 (457 aa).

Position 209 to 214 (209 to 214 (GSEPAG)) interacts with NADP(+). Residues Glu231 and Cys265 contribute to the active site.

This sequence belongs to the aldehyde dehydrogenase family.

The catalysed reaction is succinate semialdehyde + NAD(+) + H2O = succinate + NADH + 2 H(+). It carries out the reaction succinate semialdehyde + NADP(+) + H2O = succinate + NADPH + 2 H(+). Functionally, catalyzes the NADP(+)-dependent oxidation of succinate semialdehyde to succinate. It is believed to be the main source of succinate semialdehyde dehydrogenase activity in Mycobacterium. In Mycobacterium bovis (strain ATCC BAA-935 / AF2122/97), this protein is Succinate-semialdehyde dehydrogenase [NADP(+)] 1 (gabD1).